The following is a 619-amino-acid chain: Translation initiation factor IF-2 (619 aa).

Composition is skewed to low complexity over residues 1–18 and 98–111; these read MTLN…TTPK and PPQL…LTKT. 2 disordered regions span residues 1 to 24 and 90 to 113; these read MTLN…KETD and SEPQ…KTKP. The tr-type G domain maps to 121-289; it reads KKSPIVTIMG…ILLVSEIQNL (169 aa). The segment at 130–137 is G1; sequence GHVDHGKT. Residue 130 to 137 participates in GTP binding; that stretch reads GHVDHGKT. The segment at 155–159 is G2; the sequence is GITQH. Residues 176–179 are G3; sequence DTPG. GTP is bound by residues 176–180 and 230–233; these read DTPGH and NKID. The interval 230-233 is G4; it reads NKID. Positions 266–268 are G5; the sequence is SAL.

It belongs to the TRAFAC class translation factor GTPase superfamily. Classic translation factor GTPase family. IF-2 subfamily.

It localises to the cytoplasm. One of the essential components for the initiation of protein synthesis. Protects formylmethionyl-tRNA from spontaneous hydrolysis and promotes its binding to the 30S ribosomal subunits. Also involved in the hydrolysis of GTP during the formation of the 70S ribosomal complex. This chain is Translation initiation factor IF-2, found in Onion yellows phytoplasma (strain OY-M).